A 617-amino-acid chain; its full sequence is Protein fem-1 homolog C (617 aa).

7 ANK repeats span residues 2 to 31 (DLKT…KDDV), 40 to 70 (NGAT…SVEI), 82 to 111 (EGAP…SVNN), 115 to 144 (TNST…DLEV), 148 to 177 (HGHT…DVNR), 181 to 210 (KGNT…RMEK), and 213 to 242 (YGMT…TSKN). 2 TPR repeats span residues 245-279 (INAL…RHSD) and 338-371 (SYYI…QQNN). ANK repeat units follow at residues 481-523 (NNFS…DVNV) and 527-556 (EQNS…HFDS).

Belongs to the fem-1 family. In terms of assembly, component of a CRL2 E3 ubiquitin-protein ligase complex, also named ECS (Elongin BC-CUL2/5-SOCS-box protein) complex.

The protein operates within protein modification; protein ubiquitination. Its function is as follows. Substrate-recognition component of a Cul2-RING (CRL2) E3 ubiquitin-protein ligase complex of the DesCEND (destruction via C-end degrons) pathway, which recognizes a C-degron located at the extreme C terminus of target proteins, leading to their ubiquitination and degradation. The C-degron recognized by the DesCEND pathway is usually a motif of less than ten residues and can be present in full-length proteins, truncated proteins or proteolytically cleaved forms. The CRL2(FEM1C) complex specifically recognizes proteins with an arginine at the C-terminus: recognizes and binds proteins ending with -Lys/Arg-Xaa-Arg and -Lys/Arg-Xaa-Xaa-Arg C-degrons, leading to their ubiquitination and degradation. The protein is Protein fem-1 homolog C of Xenopus laevis (African clawed frog).